A 735-amino-acid polypeptide reads, in one-letter code: MAANSNSRVASNHTSKKQKVRRNIHPFTNNTRIKRASKIVKFNDSGEGDHVSDQRSNKENVLTYKSLKSRASDLLKMRETLPVYQHKREIMSYIESNPVTVLIGETGSGKSTQIPQFVLEKLYDTKKHGSIAVTQPRRVAAINLATRVAQEHGCKLGEQVGYSVRFDNTTTTRTRLKYLTDGMLLRELMMNSDLREYSVIVIDEAHERTVLTDLILGFLKSLIQGPRPDLRIIVMSATLQAEKFSEFFNNAPILFVEGRKFDVKQYYLKAPTDDIVDAVIRCCIQINQGEELGDILCFLPGQEEIDKAVTIMEKIAKYVSDEAPVPLIVPYPLYAALPAVQQSLVFAPIKGFKRKVVFSTNIAETSVTISGVKFVVDSGLRKVKVWRHQLGLATLLTVPISQASAMQRSGRAGRESEGKSFRLYCESDYVKLPKQSEPEIARSDVTSPVLMLKRYGVDDLLNWTWFENPGKEAIVMGLQELYELGALDTRGKITKRGQQMALLPLQPHLSSVLIKASEVGCLSQVIDIVSCLSVENLLLNPSPEERDEVNERRLSLCNAGKRYGDLIMLKELFDIYFYELGKSQDASSERNDWCKGLCISIRGFKNVIRVRDQLRVYCKRLFSSISEEDEESKKIGEDGELISKILKCFLTGFIKNTAIGMPDRSYRTVSTGEPISIHPSSMLFMNKSCPGIMYTEYVFTTKGYARNVSRIELSWLQEVVTNAAAVAKQKVSDSK.

Residues 1-13 show a composition bias toward polar residues; the sequence is MAANSNSRVASNH. The segment at 1 to 29 is disordered; that stretch reads MAANSNSRVASNHTSKKQKVRRNIHPFTN. Basic residues predominate over residues 14–24; the sequence is TSKKQKVRRNI. In terms of domain architecture, Helicase ATP-binding spans 91–257; it reads MSYIESNPVT…FNNAPILFVE (167 aa). 104–111 is a binding site for ATP; the sequence is GETGSGKS. The DEAH box motif lies at 203 to 206; the sequence is DEAH. Positions 262-456 constitute a Helicase C-terminal domain; it reads DVKQYYLKAP…SPVLMLKRYG (195 aa).

Belongs to the DEAD box helicase family. DEAH subfamily. In terms of assembly, interacts with NOP19. Interacts with UBP10.

Its subcellular location is the nucleus. It localises to the nucleolus. It carries out the reaction ATP + H2O = ADP + phosphate + H(+). Functionally, probable ATP-binding RNA helicase. Required for 18S rRNA synthesis. The polypeptide is Probable ATP-dependent RNA helicase DHR2 (DHR2) (Saccharomyces cerevisiae (strain ATCC 204508 / S288c) (Baker's yeast)).